Reading from the N-terminus, the 319-residue chain is Selection and upkeep of intraepithelial T-cells protein 9 (319 aa).

An N-terminal signal peptide occupies residues M1–A26. The Ig-like V-type domain occupies M27–V117. Over M27 to S139 the chain is Extracellular. Cysteines 47 and 101 form a disulfide. A glycan (N-linked (GlcNAc...) asparagine) is linked at N105. Residues I140–L160 form a helical membrane-spanning segment. At R161 to G183 the chain is on the cytoplasmic side. The chain crosses the membrane as a helical span at residues V184 to I204. Residues Y205–N228 lie on the Extracellular side of the membrane. A helical transmembrane segment spans residues I229–W249. The Cytoplasmic portion of the chain corresponds to T250 to S319.

The protein belongs to the SKINT family. As to expression, expressed in skin, thymus and testis.

It localises to the membrane. In terms of biological role, may act by engaging a cell surface molecule on immature T-cells in the embryonic thymus. This chain is Selection and upkeep of intraepithelial T-cells protein 9 (Skint9), found in Mus musculus (Mouse).